Reading from the N-terminus, the 234-residue chain is Large ribosomal subunit protein uL1 (234 aa).

It belongs to the universal ribosomal protein uL1 family. Part of the 50S ribosomal subunit.

Binds directly to 23S rRNA. The L1 stalk is quite mobile in the ribosome, and is involved in E site tRNA release. Functionally, protein L1 is also a translational repressor protein, it controls the translation of the L11 operon by binding to its mRNA. The sequence is that of Large ribosomal subunit protein uL1 from Corynebacterium aurimucosum (strain ATCC 700975 / DSM 44827 / CIP 107346 / CN-1) (Corynebacterium nigricans).